A 138-amino-acid chain; its full sequence is Large ribosomal subunit protein uL16 (138 aa).

Residues 1 to 13 (MLQPARRKYRKEQ) show a composition bias toward basic residues. The disordered stretch occupies residues 1–22 (MLQPARRKYRKEQKGRNTGVAT).

The protein belongs to the universal ribosomal protein uL16 family. As to quaternary structure, part of the 50S ribosomal subunit.

Functionally, binds 23S rRNA and is also seen to make contacts with the A and possibly P site tRNAs. This is Large ribosomal subunit protein uL16 from Polaromonas naphthalenivorans (strain CJ2).